We begin with the raw amino-acid sequence, 70 residues long: Large ribosomal subunit protein uL29 (70 aa).

It belongs to the universal ribosomal protein uL29 family.

This chain is Large ribosomal subunit protein uL29, found in Clostridium botulinum (strain ATCC 19397 / Type A).